A 426-amino-acid polypeptide reads, in one-letter code: Histidine--tRNA ligase (426 aa).

It belongs to the class-II aminoacyl-tRNA synthetase family. As to quaternary structure, homodimer.

It is found in the cytoplasm. The enzyme catalyses tRNA(His) + L-histidine + ATP = L-histidyl-tRNA(His) + AMP + diphosphate + H(+). The sequence is that of Histidine--tRNA ligase from Lactiplantibacillus plantarum (strain ATCC BAA-793 / NCIMB 8826 / WCFS1) (Lactobacillus plantarum).